The sequence spans 504 residues: UDP-N-acetylmuramoylalanine--D-glutamate ligase (504 aa).

129–135 lines the ATP pocket; sequence GTNGKTT.

It belongs to the MurCDEF family.

It localises to the cytoplasm. The enzyme catalyses UDP-N-acetyl-alpha-D-muramoyl-L-alanine + D-glutamate + ATP = UDP-N-acetyl-alpha-D-muramoyl-L-alanyl-D-glutamate + ADP + phosphate + H(+). Its pathway is cell wall biogenesis; peptidoglycan biosynthesis. Functionally, cell wall formation. Catalyzes the addition of glutamate to the nucleotide precursor UDP-N-acetylmuramoyl-L-alanine (UMA). The sequence is that of UDP-N-acetylmuramoylalanine--D-glutamate ligase from Burkholderia pseudomallei (strain 668).